Here is a 454-residue protein sequence, read N- to C-terminus: Chromosomal replication initiator protein DnaA (454 aa).

The interval 1 to 76 (MNKLKTDLNL…IGASFRILAK (76 aa)) is domain I, interacts with DnaA modulators. The domain II stretch occupies residues 76–113 (KNPKIIFAQESPGNGEKATGKKIKSLPREDKSSIFESK). The interval 114–330 (GLNTKFSFEN…GALNRLCAYA (217 aa)) is domain III, AAA+ region. Positions 158, 160, 161, and 162 each coordinate ATP. The domain IV, binds dsDNA stretch occupies residues 331 to 454 (SIHKEGKITL…KITEQLTSSQ (124 aa)).

This sequence belongs to the DnaA family. Oligomerizes as a right-handed, spiral filament on DNA at oriC.

It is found in the cytoplasm. In terms of biological role, plays an essential role in the initiation and regulation of chromosomal replication. ATP-DnaA binds to the origin of replication (oriC) to initiate formation of the DNA replication initiation complex once per cell cycle. Binds the DnaA box (a 9 base pair repeat at the origin) and separates the double-stranded (ds)DNA. Forms a right-handed helical filament on oriC DNA; dsDNA binds to the exterior of the filament while single-stranded (ss)DNA is stabiized in the filament's interior. The ATP-DnaA-oriC complex binds and stabilizes one strand of the AT-rich DNA unwinding element (DUE), permitting loading of DNA polymerase. After initiation quickly degrades to an ADP-DnaA complex that is not apt for DNA replication. Binds acidic phospholipids. In Methylacidiphilum infernorum (isolate V4) (Methylokorus infernorum (strain V4)), this protein is Chromosomal replication initiator protein DnaA.